The primary structure comprises 114 residues: Large ribosomal subunit protein bL19 (114 aa).

The protein belongs to the bacterial ribosomal protein bL19 family.

Functionally, this protein is located at the 30S-50S ribosomal subunit interface and may play a role in the structure and function of the aminoacyl-tRNA binding site. This chain is Large ribosomal subunit protein bL19, found in Acetivibrio thermocellus (strain ATCC 27405 / DSM 1237 / JCM 9322 / NBRC 103400 / NCIMB 10682 / NRRL B-4536 / VPI 7372) (Clostridium thermocellum).